A 146-amino-acid chain; its full sequence is Lysozyme C (146 aa).

Positions 1–16 (SGKYISWEDSCSYLQL) are cleaved as a signal peptide. Residues 17–146 (QKYERCELAK…LSQWTQGCKL (130 aa)) enclose the C-type lysozyme domain. Cystine bridges form between Cys22–Cys144, Cys46–Cys132, Cys81–Cys97, and Cys93–Cys111. Catalysis depends on residues Glu51 and Asp69.

This sequence belongs to the glycosyl hydrolase 22 family. In terms of tissue distribution, expressed by the skin glands.

The protein localises to the secreted. It catalyses the reaction Hydrolysis of (1-&gt;4)-beta-linkages between N-acetylmuramic acid and N-acetyl-D-glucosamine residues in a peptidoglycan and between N-acetyl-D-glucosamine residues in chitodextrins.. Lysozymes have primarily a bacteriolytic function; those in tissues and body fluids are associated with the monocyte-macrophage system and enhance the activity of immunoagents. Has antibacterial activity against the Gram-positive bacterium S.aureus and against the Gram-negative bacterium E.coli with a MIC of 1 uM and 8 uM respectively. No antifungal activity against C.albicans. The protein is Lysozyme C of Bufo gargarizans andrewsi (Andrew's toad).